Consider the following 455-residue polypeptide: Bifunctional protein GlmU (455 aa).

The interval 1–226 is pyrophosphorylase; that stretch reads MGLSVVILAA…EFEILGVNDR (226 aa). UDP-N-acetyl-alpha-D-glucosamine-binding positions include 8 to 11, K22, Q73, 78 to 79, 99 to 101, G136, E151, N166, and N224; these read LAAG, GT, and YGD. Residue D101 coordinates Mg(2+). Mg(2+) is bound at residue N224. A linker region spans residues 227–247; it reads TQLASLERVWQRNVAEKIMAK. The segment at 248–455 is N-acetyltransferase; the sequence is GVSIADPNRF…WQRPVKKTDK (208 aa). R330 and K348 together coordinate UDP-N-acetyl-alpha-D-glucosamine. Residue H360 is the Proton acceptor of the active site. Residues Y363 and N374 each coordinate UDP-N-acetyl-alpha-D-glucosamine. Acetyl-CoA contacts are provided by residues A377, 383-384, S402, A420, and R437; that span reads NY.

It in the N-terminal section; belongs to the N-acetylglucosamine-1-phosphate uridyltransferase family. The protein in the C-terminal section; belongs to the transferase hexapeptide repeat family. In terms of assembly, homotrimer. The cofactor is Mg(2+).

Its subcellular location is the cytoplasm. It catalyses the reaction alpha-D-glucosamine 1-phosphate + acetyl-CoA = N-acetyl-alpha-D-glucosamine 1-phosphate + CoA + H(+). The enzyme catalyses N-acetyl-alpha-D-glucosamine 1-phosphate + UTP + H(+) = UDP-N-acetyl-alpha-D-glucosamine + diphosphate. Its pathway is nucleotide-sugar biosynthesis; UDP-N-acetyl-alpha-D-glucosamine biosynthesis; N-acetyl-alpha-D-glucosamine 1-phosphate from alpha-D-glucosamine 6-phosphate (route II): step 2/2. It participates in nucleotide-sugar biosynthesis; UDP-N-acetyl-alpha-D-glucosamine biosynthesis; UDP-N-acetyl-alpha-D-glucosamine from N-acetyl-alpha-D-glucosamine 1-phosphate: step 1/1. It functions in the pathway bacterial outer membrane biogenesis; LPS lipid A biosynthesis. Catalyzes the last two sequential reactions in the de novo biosynthetic pathway for UDP-N-acetylglucosamine (UDP-GlcNAc). The C-terminal domain catalyzes the transfer of acetyl group from acetyl coenzyme A to glucosamine-1-phosphate (GlcN-1-P) to produce N-acetylglucosamine-1-phosphate (GlcNAc-1-P), which is converted into UDP-GlcNAc by the transfer of uridine 5-monophosphate (from uridine 5-triphosphate), a reaction catalyzed by the N-terminal domain. In Francisella tularensis subsp. novicida (strain U112), this protein is Bifunctional protein GlmU.